Consider the following 257-residue polypeptide: uncharacterized protein (257 aa).

The protein to yeast YKR015c.

This is an uncharacterized protein from Saccharomyces cerevisiae (strain ATCC 204508 / S288c) (Baker's yeast).